The following is a 503-amino-acid chain: Probable cytosol aminopeptidase (503 aa).

Residues Lys-270 and Asp-275 each contribute to the Mn(2+) site. Lys-282 is an active-site residue. Mn(2+)-binding residues include Asp-293, Asp-352, and Glu-354. Residue Arg-356 is part of the active site.

Belongs to the peptidase M17 family. The cofactor is Mn(2+).

It localises to the cytoplasm. It carries out the reaction Release of an N-terminal amino acid, Xaa-|-Yaa-, in which Xaa is preferably Leu, but may be other amino acids including Pro although not Arg or Lys, and Yaa may be Pro. Amino acid amides and methyl esters are also readily hydrolyzed, but rates on arylamides are exceedingly low.. The enzyme catalyses Release of an N-terminal amino acid, preferentially leucine, but not glutamic or aspartic acids.. In terms of biological role, presumably involved in the processing and regular turnover of intracellular proteins. Catalyzes the removal of unsubstituted N-terminal amino acids from various peptides. The sequence is that of Probable cytosol aminopeptidase from Pectobacterium atrosepticum (strain SCRI 1043 / ATCC BAA-672) (Erwinia carotovora subsp. atroseptica).